The primary structure comprises 77 residues: Protein KleA (77 aa).

It to E.coli KleC (kcrB1).

The polypeptide is Protein KleA (kleA) (Escherichia coli).